A 279-amino-acid polypeptide reads, in one-letter code: Prephenate dehydratase (279 aa).

The Prephenate dehydratase domain maps to 2-178 (KIAYLGPRGS…NSTRFWLLGK (177 aa)). The ACT domain maps to 194-272 (LALTLPDNLP…VNVRLLGNYS (79 aa)).

The catalysed reaction is prephenate + H(+) = 3-phenylpyruvate + CO2 + H2O. Its pathway is amino-acid biosynthesis; L-phenylalanine biosynthesis; phenylpyruvate from prephenate: step 1/1. This is Prephenate dehydratase (pheA) from Lactococcus lactis subsp. cremoris (strain MG1363).